Here is an 877-residue protein sequence, read N- to C-terminus: Leucine--tRNA ligase (877 aa).

A 'HIGH' region motif is present at residues 43 to 53 (PYPSGRIHMGH). The short motif at 628–632 (KMSKS) is the 'KMSKS' region element. Lys631 contacts ATP.

The protein belongs to the class-I aminoacyl-tRNA synthetase family.

The protein resides in the cytoplasm. The enzyme catalyses tRNA(Leu) + L-leucine + ATP = L-leucyl-tRNA(Leu) + AMP + diphosphate. This Brucella anthropi (strain ATCC 49188 / DSM 6882 / CCUG 24695 / JCM 21032 / LMG 3331 / NBRC 15819 / NCTC 12168 / Alc 37) (Ochrobactrum anthropi) protein is Leucine--tRNA ligase.